Consider the following 471-residue polypeptide: Cytidine and dCMP deaminase domain-containing protein 1 (471 aa).

A disordered region spans residues 1-27; the sequence is MAESNSWRSHRESDGNRSIPNGDDARN. CMP/dCMP-type deaminase domains lie at 57-153 and 312-460; these read LWME…LLSE and GVIR…KLNG. The Zn(2+) site is built by His-99, Cys-124, Cys-127, and His-393. The active-site Proton donor is Glu-395. Zn(2+) is bound by residues Cys-421 and Cys-424.

Belongs to the cytidine and deoxycytidylate deaminase family. Zn(2+) serves as cofactor.

The enzyme catalyses 2'-deoxycytidine + H2O + H(+) = 2'-deoxyuridine + NH4(+). The catalysed reaction is cytidine + H2O + H(+) = uridine + NH4(+). Its function is as follows. Catalyzes the deamination of cytidine and deoxycytidine into uridine and deoxyuridine, respectively. This is Cytidine and dCMP deaminase domain-containing protein 1 (cdadc1) from Danio rerio (Zebrafish).